Reading from the N-terminus, the 1413-residue chain is GTPase-activating protein and VPS9 domain-containing protein 1 (1413 aa).

Residues 147 to 385 enclose the Ras-GAP domain; sequence SYLLQVLRYL…AAFLDVVIGG (239 aa). Phosphoserine is present on serine 227. A phosphothreonine mark is found at threonine 390 and threonine 458. Disordered regions lie at residues 448 to 474, 540 to 587, 718 to 799, and 826 to 852; these read KPGK…PANK, LSDG…GSNG, ESCS…PPSQ, and HYAR…ARLP. The span at 451–467 shows a compositional bias: polar residues; sequence KSSSLEMTPYSTPQLSP. The residue at position 460 (tyrosine 460) is a Phosphotyrosine. Serine 466 carries the phosphoserine modification. Position 470 is a phosphothreonine (threonine 470). Residues serine 721, serine 725, and serine 736 each carry the phosphoserine modification. Polar residues predominate over residues 737 to 756; that stretch reads SRPSTPGLSVVSGISATSED. Threonine 741 carries the post-translational modification Phosphothreonine. The residue at position 745 (serine 745) is a Phosphoserine. Positions 757-768 are enriched in basic and acidic residues; that stretch reads IPNKIEDLRSEC. Residues serine 856, serine 882, serine 883, serine 888, serine 894, serine 946, serine 972, and serine 999 each carry the phosphoserine modification. Basic and acidic residues predominate over residues 871–882; that stretch reads HSYPERLVRSRS. A disordered region spans residues 871–957; that stretch reads HSYPERLVRS…DEKSDRNRPW (87 aa). The segment covering 883 to 897 has biased composition (low complexity); that stretch reads SDVVSSVRRPMSDPS. Positions 934–955 are enriched in basic and acidic residues; it reads DSSRGETEERKDSDDEKSDRNR. The interval 1011-1049 is disordered; sequence VMGDGESAHDSPRDETLQNISADDLPDSASQAAHPQDSA. Positions 1016–1026 are enriched in basic and acidic residues; the sequence is ESAHDSPRDET. 2 positions are modified to phosphoserine: serine 1031 and serine 1038. Residues 1273 to 1413 form the VPS9 domain; that stretch reads ILRDQVLHEH…EFIKTIDDRK (141 aa).

Belongs to the GAPVD1 family. Interacts with TRIP10/CIP4. Interacts with RAB5A.

The protein resides in the membrane. It localises to the endosome. Its function is as follows. Acts both as a GTPase-activating protein (GAP) and a guanine nucleotide exchange factor (GEF), and participates in various processes such as endocytosis, insulin receptor internalization or LC2A4/GLUT4 trafficking. Acts as a GEF for the Ras-related protein RAB31 by exchanging bound GDP for free GTP, leading to regulate LC2A4/GLUT4 trafficking. In the absence of insulin, it maintains RAB31 in an active state and promotes a futile cycle between LC2A4/GLUT4 storage vesicles and early endosomes, retaining LC2A4/GLUT4 inside the cells. Upon insulin stimulation, it is translocated to the plasma membrane, releasing LC2A4/GLUT4 from intracellular storage vesicles. Also involved in EGFR trafficking and degradation, possibly by promoting EGFR ubiquitination and subsequent degradation by the proteasome. Has GEF activity for Rab5 and GAP activity for Ras. This chain is GTPase-activating protein and VPS9 domain-containing protein 1 (GAPVD1), found in Bos taurus (Bovine).